A 184-amino-acid polypeptide reads, in one-letter code: MGSGMSQILPGLYIGNFKDARDAEQLSRNKVTHILSVHDTARPMLEGVKYLCIPAADTPSQNLTRHFKESIKFIHECRLQGESCLVHCLAGVSRSVTLVIAYIMTVTDFGWEDALHTVRAGRSCANPNLGFQRQLQEFEKHEVHQYRQWLREEYGENPLRDAEEAKNILAAPGILKYWAFLRRL.

A lipid anchor (N-myristoyl glycine) is attached at Gly-2. One can recognise a Tyrosine-protein phosphatase domain in the interval 4–144; it reads GMSQILPGLY…LQEFEKHEVH (141 aa). Cys-88 serves as the catalytic Phosphocysteine intermediate. Residues Leu-89, Ala-90, Val-92, Ser-93, and Arg-94 each contribute to the a protein site.

Belongs to the protein-tyrosine phosphatase family. Non-receptor class dual specificity subfamily. In terms of assembly, monomer. Interacts with LCK; the interaction is direct. Interacts with UBR2; the interaction is direct. In terms of processing, myristoylation regulates subcellular location, and is necessary for activation of JNK.

It is found in the cytoplasm. It carries out the reaction O-phospho-L-tyrosyl-[protein] + H2O = L-tyrosyl-[protein] + phosphate. The catalysed reaction is O-phospho-L-seryl-[protein] + H2O = L-seryl-[protein] + phosphate. The enzyme catalyses O-phospho-L-threonyl-[protein] + H2O = L-threonyl-[protein] + phosphate. In terms of biological role, dual specificity phosphatase; can dephosphorylate both phosphotyrosine and phosphoserine or phosphothreonine residues. Activates the JNK signaling pathway. Inhibits T-cell receptor signaling and T-cell mediated immune responses, acting, at least in part, by inducing degradation of E3 ubiquitin ligase UBR2. Dephosphorylates and thereby induces 'Lys-48'-linked ubiquitination of UBR2, leading to proteasomal degradation of UBR2. Dephosphorylates and thereby inactivates tyrosine kinase LCK. Inhibits UBR2-mediated 'Lys-63'-linked ubiquitination of LCK. May play a role in B-cell receptor (BCR) signaling and B-cell function. This is Dual specificity protein phosphatase 22 (Dusp22) from Mus musculus (Mouse).